A 249-amino-acid chain; its full sequence is Putative TrmH family tRNA/rRNA methyltransferase (249 aa).

Gly196, Ile216, and Leu225 together coordinate S-adenosyl-L-methionine.

The protein belongs to the class IV-like SAM-binding methyltransferase superfamily. RNA methyltransferase TrmH family.

The chain is Putative TrmH family tRNA/rRNA methyltransferase from Staphylococcus haemolyticus (strain JCSC1435).